The chain runs to 314 residues: Aspartate carbamoyltransferase catalytic subunit (314 aa).

Residues arginine 55 and threonine 56 each coordinate carbamoyl phosphate. Residue lysine 83 coordinates L-aspartate. Residues arginine 105, histidine 139, and glutamine 142 each contribute to the carbamoyl phosphate site. Residues arginine 172 and arginine 226 each contribute to the L-aspartate site. 2 residues coordinate carbamoyl phosphate: glycine 267 and proline 268.

It belongs to the aspartate/ornithine carbamoyltransferase superfamily. ATCase family. Heterododecamer (2C3:3R2) of six catalytic PyrB chains organized as two trimers (C3), and six regulatory PyrI chains organized as three dimers (R2).

It carries out the reaction carbamoyl phosphate + L-aspartate = N-carbamoyl-L-aspartate + phosphate + H(+). It functions in the pathway pyrimidine metabolism; UMP biosynthesis via de novo pathway; (S)-dihydroorotate from bicarbonate: step 2/3. Catalyzes the condensation of carbamoyl phosphate and aspartate to form carbamoyl aspartate and inorganic phosphate, the committed step in the de novo pyrimidine nucleotide biosynthesis pathway. This is Aspartate carbamoyltransferase catalytic subunit from Rhodococcus opacus (strain B4).